Here is a 654-residue protein sequence, read N- to C-terminus: MAKERIVLPSAEFKKNSNITLKDYKSLYKESIENPNKFWAKEANRLTWFKKWTKVLNHDFKNAKVEWFKGGKLNVSYNCLDRHISTPLKNKAALIWEGDNPSESKVLTYYDVYREVNRFANVLKKYGVKKGDRVLVYLPMIPELAITILACTRIGAIHSVVFGGFSPEALQSRIDDCKPKLIVTADGGFRGGKPIELKRNVDIALEKSKEDVKTVIVVRRTGNESGLVWKDGRDYWYHFLIGDPDLSPYCKPESMDAEDPLFILYTSGSTGKPKGVLHTTGGYLLGVNLTFHYVFDIKPEDTYWCTADIGWVTGHSYLVYGPLSNGASSVMFEGVPSYPDAGRFWDVIDKYGVNIFYTAPTAIRALMREGLTHVQKRNLSSLRLLGSVGEPINPEAWEWYFKIIGKEKCPIVDTWWQTETGSIMITALPGAIPQKPGSATLPFFGVQPVLVDNDGKEINDKGEVSGNLCIKSPWPSMMRGVYGDSKRFFDTYFSQFKGYYFTGDGARRDKDGYYWITGRVDDVINVSGHRIGSAEVESALVENRSVAEAAVVGFPHDIKGQGIYAYVTVKEGIATNDTLKKELVAIVEKVIGKIARPDVIHWAPSLPKTRSGKIMRRILRKIASGEFEGLGDTSTLADPSVVQKLIEDKRKFHS.

Residues 190–193 (RGGK) and threonine 313 each bind CoA. ATP contacts are provided by residues 389-391 (GEP), 413-418 (DTWWQT), aspartate 504, and arginine 519. Serine 527 is a binding site for CoA. Arginine 530 is an ATP binding site. Residues valine 541 and valine 546 each contribute to the Mg(2+) site. Position 613 is an N6-acetyllysine (lysine 613).

This sequence belongs to the ATP-dependent AMP-binding enzyme family. Mg(2+) is required as a cofactor. Acetylated. Deacetylation by the SIR2-homolog deacetylase activates the enzyme.

It carries out the reaction acetate + ATP + CoA = acetyl-CoA + AMP + diphosphate. Functionally, catalyzes the conversion of acetate into acetyl-CoA (AcCoA), an essential intermediate at the junction of anabolic and catabolic pathways. AcsA undergoes a two-step reaction. In the first half reaction, AcsA combines acetate with ATP to form acetyl-adenylate (AcAMP) intermediate. In the second half reaction, it can then transfer the acetyl group from AcAMP to the sulfhydryl group of CoA, forming the product AcCoA. The sequence is that of Acetyl-coenzyme A synthetase from Leptospira borgpetersenii serovar Hardjo-bovis (strain JB197).